The primary structure comprises 228 residues: Protein N-lysine methyltransferase METTL21D (228 aa).

The residue at position 2 (Ala2) is an N-acetylalanine. S-adenosyl-L-methionine-binding positions include Trp43, 75–77 (GSG), Asp96, Trp126, Ala142, and Tyr147.

It belongs to the methyltransferase superfamily. METTL21 family. Interacts with ALKBH6. Interacts with ASPSCR1 and UBXN6; interaction with ASPSCR1, but not with UBXN6, enhances VCP methylation. Widely expressed.

It localises to the cytoplasm. The catalysed reaction is L-lysyl-[protein] + 3 S-adenosyl-L-methionine = N(6),N(6),N(6)-trimethyl-L-lysyl-[protein] + 3 S-adenosyl-L-homocysteine + 3 H(+). Its function is as follows. Protein N-lysine methyltransferase that specifically trimethylates 'Lys-315' of VCP/p97; this modification may decrease VCP ATPase activity. This is Protein N-lysine methyltransferase METTL21D (Vcpkmt) from Mus musculus (Mouse).